Here is a 639-residue protein sequence, read N- to C-terminus: 3D-(3,5/4)-trihydroxycyclohexane-1,2-dione hydrolase (639 aa).

Residue Glu-65 participates in thiamine diphosphate binding. Residues 437–517 are thiamine pyrophosphate binding; that stretch reads SLPGDLQRMW…INIILFDNSG (81 aa). Mg(2+) contacts are provided by Asp-488 and Asn-515.

This sequence belongs to the TPP enzyme family. It depends on Mg(2+) as a cofactor. The cofactor is thiamine diphosphate.

It catalyses the reaction 3D-3,5/4-trihydroxycyclohexane-1,2-dione + H2O = 5-deoxy-D-glucuronate + H(+). It participates in polyol metabolism; myo-inositol degradation into acetyl-CoA; acetyl-CoA from myo-inositol: step 3/7. In terms of biological role, involved in the cleavage of the C1-C2 bond of 3D-(3,5/4)-trihydroxycyclohexane-1,2-dione (THcHDO) to yield 5-deoxy-glucuronate (5DG). The sequence is that of 3D-(3,5/4)-trihydroxycyclohexane-1,2-dione hydrolase from Geobacillus thermodenitrificans (strain NG80-2).